We begin with the raw amino-acid sequence, 274 residues long: Siroheme biosynthesis protein MET8 (274 aa).

NAD(+) contacts are provided by residues 23–24 (EV), 43–45 (SPD), and F93. Catalysis depends on D141, which acts as the Proton acceptor.

The protein belongs to the precorrin-2 dehydrogenase / sirohydrochlorin ferrochelatase family. MET8 subfamily. In terms of assembly, homodimer.

It carries out the reaction precorrin-2 + NAD(+) = sirohydrochlorin + NADH + 2 H(+). It catalyses the reaction siroheme + 2 H(+) = sirohydrochlorin + Fe(2+). It functions in the pathway porphyrin-containing compound metabolism; siroheme biosynthesis; siroheme from sirohydrochlorin: step 1/1. The protein operates within porphyrin-containing compound metabolism; siroheme biosynthesis; sirohydrochlorin from precorrin-2: step 1/1. In terms of biological role, catalyzes the conversion of precorrin-2 into siroheme. This reaction consist of the NAD-dependent oxidation of precorrin-2 into sirohydrochlorin and its subsequent ferrochelation into siroheme. The protein is Siroheme biosynthesis protein MET8 of Saccharomyces cerevisiae (strain ATCC 204508 / S288c) (Baker's yeast).